We begin with the raw amino-acid sequence, 303 residues long: DDRGK domain-containing protein 1 (303 aa).

Residues 1-2 lie on the Lumenal side of the membrane; that stretch reads MD. Residues 3–23 form a helical membrane-spanning segment; it reads LILLIGIATALLIILLTLYFL. Over 24–303 the chain is Cytoplasmic; that stretch reads QKRNAPAETK…TPVTASEGGA (280 aa). Disordered regions lie at residues 31–53 and 84–160; these read ETKA…VPRR and AIDP…AEVE. The span at 106–160 shows a compositional bias: basic and acidic residues; the sequence is LDEKMGAKKRAKMEAKEQKRLQREQELHDREQRKVKEAKEEAERKQQDDLDAEVE.

Belongs to the DDRGK1 family. Interacts with Atg9; the interaction is transient.

It is found in the endoplasmic reticulum membrane. Substrate adapter for ufmylation, the covalent attachment of the ubiquitin-like modifier UFM1 to substrate proteins. Required for ufmylation of Atg9; protects the nervous system during aging, possibly by stabilizing Atg9 and supporting its function. The polypeptide is DDRGK domain-containing protein 1 (Drosophila grimshawi (Hawaiian fruit fly)).